A 458-amino-acid polypeptide reads, in one-letter code: 5-hydroxytryptamine receptor 2C (458 aa).

The first 32 residues, 1–32 (MVNLRKAVHSFLVHLIGLLVWQCDISVSPVAA), serve as a signal peptide directing secretion. At 33–55 (LVTDIFNTSDGGRFKFPDGVQNW) the chain is on the extracellular side. Residues 56–80 (PALSIVIIIILTIGGNILVIMAVSL) form a helical membrane-spanning segment. Residues 81–86 (EKKLHN) lie on the Cytoplasmic side of the membrane. The chain crosses the membrane as a helical span at residues 87-111 (ATNYFLMSLAIADMLVGLLVMPLSL). The Extracellular segment spans residues 112 to 128 (LAILYDYVWPLPRYLCP). An intrachain disulfide couples Cys127 to Cys207. Residues 129–151 (VWISLDVLFSTASIMHLCAISLD) form a helical membrane-spanning segment. Thr139 provides a ligand contact to ergotamine. The DRY motif; important for ligand-induced conformation changes signature appears at 151–153 (DRY). Over 152–167 (RYVAIRNPVEHSRFNS) the chain is Cytoplasmic. A helical membrane pass occupies residues 168 to 189 (RTKAIMKIAIVWAISIGVSVPI). Residues 190–213 (PVIGLRDEEKVFVNNTTCVLNDPN) are Extracellular-facing. Residues Asn203 and Asn204 are each glycosylated (N-linked (GlcNAc...) asparagine). Leu209 is an ergotamine binding site. A helical transmembrane segment spans residues 214-236 (FVLIGSFVAFFIPLTIMVITYCL). Over 237 to 311 (TIHVLRRQAL…AINNERKASK (75 aa)) the chain is Cytoplasmic. The disordered stretch occupies residues 272–301 (TEEENSANPNQDSNPRRRKKKERRPRGTMQ). The span at 287–297 (RRRKKKERRPR) shows a compositional bias: basic residues. A helical transmembrane segment spans residues 312 to 336 (VLGIVFFVFLVMWCPFFITNILSVL). A disulfide bridge connects residues Cys337 and Cys341. Over 337-347 (CGKACNQKLME) the chain is Extracellular. The helical transmembrane segment at 348–370 (KLLNVFVWIGYVCSGINPLVYTL) threads the bilayer. An NPxxY motif; important for ligand-induced conformation changes and signaling motif is present at residues 364-368 (NPLVY). The Cytoplasmic segment spans residues 371–458 (FNKIYRRAFS…SVVSERISSV (88 aa)). Residues 456-458 (SSV) carry the PDZ-binding motif.

The protein belongs to the G-protein coupled receptor 1 family. In terms of assembly, interacts with MPDZ. Interacts with ARRB2. Interacts with MPP3; this interaction stabilizes the receptor at the plasma membrane and prevents the desensitization of the HTR2C receptor-mediated calcium response.

The protein resides in the cell membrane. Functionally, G-protein coupled receptor for 5-hydroxytryptamine (serotonin). Also functions as a receptor for various drugs and psychoactive substances, including ergot alkaloid derivatives, 1-2,5,-dimethoxy-4-iodophenyl-2-aminopropane (DOI) and lysergic acid diethylamide (LSD). Ligand binding causes a conformation change that triggers signaling via guanine nucleotide-binding proteins (G proteins) and modulates the activity of downstream effectors. HTR2C is coupled to G(q)/G(11) G alpha proteins and activates phospholipase C-beta, releasing diacylglycerol (DAG) and inositol 1,4,5-trisphosphate (IP3) second messengers that modulate the activity of phosphatidylinositol 3-kinase and promote the release of Ca(2+) ions from intracellular stores, respectively. Beta-arrestin family members inhibit signaling via G proteins and mediate activation of alternative signaling pathways. Regulates neuronal activity via the activation of short transient receptor potential calcium channels in the brain, and thereby modulates the activation of pro-opiomelanocortin neurons and the release of CRH that then regulates the release of corticosterone. Plays a role in the regulation of appetite and eating behavior, responses to anxiogenic stimuli and stress. Plays a role in insulin sensitivity and glucose homeostasis. This is 5-hydroxytryptamine receptor 2C from Canis lupus familiaris (Dog).